The following is an 81-amino-acid chain: Mipartoxin-1 (81 aa).

Positions Met-1–Ser-21 are cleaved as a signal peptide. 4 cysteine pairs are disulfide-bonded: Cys-24–Cys-42, Cys-35–Cys-61, Cys-65–Cys-73, and Cys-74–Cys-79.

Belongs to the three-finger toxin family. Short-chain subfamily. Contains 4 disulfide bonds. In terms of tissue distribution, expressed by the venom gland.

The protein resides in the secreted. In terms of biological role, snake venom neurotoxin that blocks neuromuscular transmission on both avian and mouse nerve-muscle preparations, presenting a postsynaptic action through the nicotinic acetylcholine receptor (nAChR). Reversibly inhibits twitches in mouse phrenic nerve diaphragm and irreversibly in chick biventer cervicis muscle. Has no cytotoxic activity towards C2C12 cells up to 180 ug/ml. The polypeptide is Mipartoxin-1 (Micrurus mipartitus (Red-tailed coral snake)).